A 757-amino-acid polypeptide reads, in one-letter code: Lysyl oxidase homolog 4 (757 aa).

An N-terminal signal peptide occupies residues 1-25 (MWFLPAALPLLPLLLLLGQAPPSRP). 4 SRCR domains span residues 33-134 (LRLV…VVCN), 160-288 (VRLK…VSCV), 312-412 (VRLR…VRCN), and 422-530 (VRLA…VSCT). Cystine bridges form between Cys-59/Cys-123, Cys-72/Cys-133, Cys-103/Cys-113, Cys-192/Cys-277, Cys-205/Cys-287, Cys-252/Cys-262, Cys-337/Cys-401, Cys-350/Cys-411, Cys-381/Cys-391, Cys-451/Cys-516, Cys-464/Cys-529, Cys-498/Cys-508, Cys-559/Cys-565, Cys-611/Cys-659, Cys-643/Cys-649, Cys-671/Cys-681, and Cys-718/Cys-732. N-linked (GlcNAc...) asparagine glycosylation occurs at Asn-199. A lysyl-oxidase like region spans residues 534–737 (PDLVMNAQLV…WLHNCHTGDS (204 aa)). His-612, His-614, and His-616 together coordinate Cu cation. The N-linked (GlcNAc...) asparagine glycan is linked to Asn-630. Positions 639-675 (KASFCLEDTNCPTGMQRRYACANFGEQGVTVGCWDTY) form a cross-link, lysine tyrosylquinone (Lys-Tyr). A 2',4',5'-topaquinone modification is found at Tyr-675.

It belongs to the lysyl oxidase family. Requires Cu cation as cofactor. It depends on lysine tyrosylquinone residue as a cofactor. In terms of processing, the lysine tyrosylquinone cross-link (LTQ) is generated by condensation of the epsilon-amino group of a lysine with a topaquinone produced by oxidation of tyrosine. Post-translationally, may be proteolytically cleaved by BMP1.

The protein localises to the secreted. It is found in the extracellular space. The enzyme catalyses L-lysyl-[protein] + O2 + H2O = (S)-2-amino-6-oxohexanoyl-[protein] + H2O2 + NH4(+). Its function is as follows. Catalyzes the oxidative deamination of lysine and hydroxylysine residues in collagen and elastin, resulting in the formation of covalent cross-linkages, and the stabilization of collagen and elastin fibers. This is Lysyl oxidase homolog 4 (LOXL4) from Bos taurus (Bovine).